A 278-amino-acid polypeptide reads, in one-letter code: 4-deoxy-L-threo-5-hexosulose-uronate ketol-isomerase (278 aa).

4 residues coordinate Zn(2+): His196, His198, Glu203, and His245.

Belongs to the KduI family. Homohexamer. The cofactor is Zn(2+).

The enzyme catalyses 5-dehydro-4-deoxy-D-glucuronate = 3-deoxy-D-glycero-2,5-hexodiulosonate. It functions in the pathway glycan metabolism; pectin degradation; 2-dehydro-3-deoxy-D-gluconate from pectin: step 4/5. Catalyzes the isomerization of 5-dehydro-4-deoxy-D-glucuronate to 3-deoxy-D-glycero-2,5-hexodiulosonate. The sequence is that of 4-deoxy-L-threo-5-hexosulose-uronate ketol-isomerase from Escherichia coli (strain UTI89 / UPEC).